Consider the following 278-residue polypeptide: HTH-type transcriptional activator RhaS (278 aa).

The 99-residue stretch at 174-272 (NLLLAWLEDH…NWSPRDIRQG (99 aa)) folds into the HTH araC/xylS-type domain. DNA-binding regions (H-T-H motif) lie at residues 191–212 (DAVADQFSLSLRTLHRQLKQKT) and 239–262 (VTDIAYRCGFSDSNHFSTLFRREF).

In terms of assembly, binds DNA as a dimer.

It localises to the cytoplasm. In terms of biological role, activates expression of the rhaBAD and rhaT operons. The chain is HTH-type transcriptional activator RhaS from Escherichia coli O45:K1 (strain S88 / ExPEC).